An 876-amino-acid chain; its full sequence is Alanine--tRNA ligase (876 aa).

Positions 560, 564, 662, and 666 each coordinate Zn(2+).

This sequence belongs to the class-II aminoacyl-tRNA synthetase family. Zn(2+) serves as cofactor.

The protein localises to the cytoplasm. It catalyses the reaction tRNA(Ala) + L-alanine + ATP = L-alanyl-tRNA(Ala) + AMP + diphosphate. Its function is as follows. Catalyzes the attachment of alanine to tRNA(Ala) in a two-step reaction: alanine is first activated by ATP to form Ala-AMP and then transferred to the acceptor end of tRNA(Ala). Also edits incorrectly charged Ser-tRNA(Ala) and Gly-tRNA(Ala) via its editing domain. The polypeptide is Alanine--tRNA ligase (Synechococcus elongatus (strain ATCC 33912 / PCC 7942 / FACHB-805) (Anacystis nidulans R2)).